The following is a 238-amino-acid chain: UPF0280 protein Mboo_1274 (238 aa).

This sequence belongs to the UPF0280 family.

This is UPF0280 protein Mboo_1274 from Methanoregula boonei (strain DSM 21154 / JCM 14090 / 6A8).